The sequence spans 289 residues: MFVNFKKIQSYIAYDLYDNNKIREFVDSLKQEELDNYIIYQFEVDDATLLQLEKEELELTQLVQEQYIDKKDFSFLNNHHLWIKYQDQDFIVNEIKNPENNNNNNNNNFYLNCFTIKGTENEIKKELNLNDNDNEINTYATFSITRYHFKMPQKIDLYIDCVINYDNNQNGNNNNNNNNNNNNNKNKFSLYGHVKCQAKDYSELLLFYILYNQPKPLKPNIINYLLSLKNNDNNNNDKTNPINKLQSPISNETILQTPKVFDEDPLFKFIQKGENSQNSSSNSSFCSIN.

This is an uncharacterized protein from Dictyostelium discoideum (Social amoeba).